The following is a 239-amino-acid chain: Ribulose-phosphate 3-epimerase (239 aa).

Substrate is bound at residue Ser9. Positions 34, 36, and 78 each coordinate a divalent metal cation. Residue Asp36 is the Proton acceptor of the active site. Substrate-binding positions include His78, 154 to 157, 183 to 185, and 205 to 207; these read GFGG, DGG, and GTS. Asp183 is a binding site for a divalent metal cation. The active-site Proton donor is the Asp183.

This sequence belongs to the ribulose-phosphate 3-epimerase family. Co(2+) serves as cofactor. It depends on Fe(2+) as a cofactor. Requires Mn(2+) as cofactor. The cofactor is Zn(2+).

The enzyme catalyses D-ribulose 5-phosphate = D-xylulose 5-phosphate. Its pathway is carbohydrate degradation; pentose phosphate pathway; D-xylulose 5-phosphate from D-ribulose 5-phosphate (non-oxidative stage): step 1/1. In terms of biological role, catalyzes the reversible epimerization of D-ribulose 5-phosphate to D-xylulose 5-phosphate. This is Ribulose-phosphate 3-epimerase (RPE1) from Eremothecium gossypii (strain ATCC 10895 / CBS 109.51 / FGSC 9923 / NRRL Y-1056) (Yeast).